The following is a 453-amino-acid chain: Aldehyde dehydrogenase, dimeric NADP-preferring (453 aa).

N-acetylserine is present on Ser-2. Lys-178 bears the N6-acetyllysine mark. 188 to 193 (GNTAVG) is a binding site for NAD(+). Position 194 is an N6-acetyllysine (Lys-194). Residues Glu-210 and Cys-244 contribute to the active site.

This sequence belongs to the aldehyde dehydrogenase family. Homodimer.

It is found in the cytoplasm. It catalyses the reaction an aldehyde + NAD(+) + H2O = a carboxylate + NADH + 2 H(+). It carries out the reaction octanal + NAD(+) + H2O = octanoate + NADH + 2 H(+). In terms of biological role, ALDHs play a major role in the detoxification of alcohol-derived acetaldehyde. They are involved in the metabolism of corticosteroids, biogenic amines, neurotransmitters, and lipid peroxidation. Oxidizes medium and long chain aldehydes into non-toxic fatty acids. Preferentially oxidizes aromatic aldehyde substrates. Comprises about 50 percent of corneal epithelial soluble proteins. May play a role in preventing corneal damage caused by ultraviolet light. This chain is Aldehyde dehydrogenase, dimeric NADP-preferring (ALDH3A1), found in Canis lupus familiaris (Dog).